Here is a 449-residue protein sequence, read N- to C-terminus: Tubulin alpha-1C chain (449 aa).

An MREC motif motif is present at residues 1–4 (MREC). Glutamine 11 is a GTP binding site. The residue at position 40 (lysine 40) is an N6-acetyllysine. Residues glutamate 71, serine 140, glycine 144, threonine 145, threonine 179, asparagine 206, and asparagine 228 each contribute to the GTP site. Glutamate 71 provides a ligand contact to Mg(2+). Glutamate 254 is a catalytic residue. 3'-nitrotyrosine is present on tyrosine 282. Tyrosine 432 is modified (phosphotyrosine). At serine 439 the chain carries Phosphoserine. At tyrosine 449 the chain carries 3'-nitrotyrosine.

This sequence belongs to the tubulin family. In terms of assembly, dimer of alpha and beta chains. A typical microtubule is a hollow water-filled tube with an outer diameter of 25 nm and an inner diameter of 15 nM. Alpha-beta heterodimers associate head-to-tail to form protofilaments running lengthwise along the microtubule wall with the beta-tubulin subunit facing the microtubule plus end conferring a structural polarity. Microtubules usually have 13 protofilaments but different protofilament numbers can be found in some organisms and specialized cells. Mg(2+) is required as a cofactor. Some glutamate residues at the C-terminus are polyglycylated, resulting in polyglycine chains on the gamma-carboxyl group. Glycylation is mainly limited to tubulin incorporated into axonemes (cilia and flagella) whereas glutamylation is prevalent in neuronal cells, centrioles, axonemes, and the mitotic spindle. Both modifications can coexist on the same protein on adjacent residues, and lowering polyglycylation levels increases polyglutamylation, and reciprocally. Cilia and flagella glycylation is required for their stability and maintenance. Flagella glycylation controls sperm motility. Post-translationally, some glutamate residues at the C-terminus are polyglutamylated, resulting in polyglutamate chains on the gamma-carboxyl group. Polyglutamylation plays a key role in microtubule severing by spastin (SPAST). SPAST preferentially recognizes and acts on microtubules decorated with short polyglutamate tails: severing activity by SPAST increases as the number of glutamates per tubulin rises from one to eight, but decreases beyond this glutamylation threshold. Glutamylation is also involved in cilia motility. In terms of processing, acetylation of alpha chains at Lys-40 is located inside the microtubule lumen. This modification has been correlated with increased microtubule stability, intracellular transport and ciliary assembly. Methylation of alpha chains at Lys-40 is found in mitotic microtubules and is required for normal mitosis and cytokinesis contributing to genomic stability. Post-translationally, nitration of Tyr-449 is irreversible and interferes with normal dynein intracellular distribution. In terms of processing, undergoes a tyrosination/detyrosination cycle, the cyclic removal and re-addition of a C-terminal tyrosine residue by the enzymes tubulin tyrosine carboxypeptidase (MATCAP1, VASH1 or VASH2) and tubulin tyrosine ligase (TTL), respectively. Tyrosination promotes microtubule interaction with CAP-Gly domain-containing proteins such as CLIP1, CLIP2 and DCTN1. Tyrosination regulates the initiation of dynein-dynactin motility via interaction with DCTN1, which brings the dynein-dynactin complex into contact with microtubules. In neurons, tyrosinated tubulins mediate the initiation of retrograde vesicle transport. Post-translationally, detyrosination is involved in metaphase plate congression by guiding chromosomes during mitosis: detyrosination promotes interaction with CENPE, promoting pole-proximal transport of chromosomes toward the equator. Detyrosination increases microtubules-dependent mechanotransduction in dystrophic cardiac and skeletal muscle. In cardiomyocytes, detyrosinated microtubules are required to resist to contractile compression during contraction: detyrosination promotes association with desmin (DES) at force-generating sarcomeres, leading to buckled microtubules and mechanical resistance to contraction.

The protein resides in the cytoplasm. It is found in the cytoskeleton. It catalyses the reaction GTP + H2O = GDP + phosphate + H(+). Tubulin is the major constituent of microtubules, a cylinder consisting of laterally associated linear protofilaments composed of alpha- and beta-tubulin heterodimers. Microtubules grow by the addition of GTP-tubulin dimers to the microtubule end, where a stabilizing cap forms. Below the cap, tubulin dimers are in GDP-bound state, owing to GTPase activity of alpha-tubulin. The sequence is that of Tubulin alpha-1C chain (Tuba1c) from Rattus norvegicus (Rat).